The following is a 505-amino-acid chain: Cytochrome P450 monooxygenase efuB (505 aa).

Residues 12 to 34 form a helical membrane-spanning segment; it reads GFWPTVAGTVATYLFYQIVATVY. A heme-binding site is contributed by cysteine 450.

It belongs to the cytochrome P450 family. It depends on heme as a cofactor.

The protein resides in the membrane. It participates in secondary metabolite biosynthesis; terpenoid biosynthesis. In terms of biological role, cytochrome P450 monooxygenase; part of the gene cluster that mediates the biosynthesis of enfumafungin, a glycosylated fernene-type triterpenoid with potent antifungal activity, mediated by its interaction with beta-1,3-glucan synthase and the fungal cell wall. The pathway begins with the terpene cyclase-glycosyl transferase fusion protein that most likely uses 2,3-oxidosqualene as substrate and catalyzes glycosylation immediately after cyclization. The fernene glycoside then could be processed by the desaturase efuI which catalyzes isomerization of a double bond established by efuA to form the core structure. The latter would then undergo a series of hydroxylations in unknown order at C-2, C-19, C-23 and C-25, which would be catalyzed by two of the three cytochrome P450 monooxygenases efuB, efuG or efuH. The hydroxy-group at C-25 becomes oxidized by the dehydrogenase efuE to enable a spontaneous, non-enzymatic hemiacetal formation with C-23. After hydroxylation at C-2, acetylation by the acetyltransferase efuC takes place. The final steps in enfumafungin biosynthesis require expansion of the 5-membered ring by lactonization via a Baeyer-Villiger reaction mediated by one of the BGC's cytochrome P450 monooxygenases (efuB, efuG or efuH) followed by ring cleavage. This type of reaction would establish a double bond between C-20 and C-21 which could be reduced by the reductase efuL to form the final product. This chain is Cytochrome P450 monooxygenase efuB, found in Hormonema carpetanum.